The chain runs to 146 residues: Globin (146 aa).

The residue at position 1 (Ser-1) is an N-acetylserine. One can recognise a Globin domain in the interval 1–146 (SLSGAEADLL…IIDALKKAGK (146 aa)). His-95 serves as a coordination point for heme b.

Belongs to the globin family. As to quaternary structure, monomer.

This Bursatella leachii (Ragged sea hare) protein is Globin.